The primary structure comprises 503 residues: Probable cytosol aminopeptidase (503 aa).

Residues lysine 270 and aspartate 275 each coordinate Mn(2+). Lysine 282 is a catalytic residue. The Mn(2+) site is built by aspartate 293, aspartate 352, and glutamate 354. The active site involves arginine 356.

Belongs to the peptidase M17 family. Mn(2+) serves as cofactor.

It localises to the cytoplasm. The catalysed reaction is Release of an N-terminal amino acid, Xaa-|-Yaa-, in which Xaa is preferably Leu, but may be other amino acids including Pro although not Arg or Lys, and Yaa may be Pro. Amino acid amides and methyl esters are also readily hydrolyzed, but rates on arylamides are exceedingly low.. It carries out the reaction Release of an N-terminal amino acid, preferentially leucine, but not glutamic or aspartic acids.. Its function is as follows. Presumably involved in the processing and regular turnover of intracellular proteins. Catalyzes the removal of unsubstituted N-terminal amino acids from various peptides. The protein is Probable cytosol aminopeptidase of Escherichia coli O139:H28 (strain E24377A / ETEC).